A 670-amino-acid polypeptide reads, in one-letter code: ATP synthase subunit alpha 2 (670 aa).

180–187 (GDRATGKT) lines the ATP pocket. Positions 525-670 (MPAEDAAGDI…DAEAEARHKR (146 aa)) are disordered. A compositionally biased stretch (basic and acidic residues) spans 543–588 (ARGDADRDADHGANREVSREVSPEASREVSREVSREVSHEADRDAA). Residues 589 to 599 (ADAARVAGRAP) show a composition bias toward low complexity. Positions 621–639 (ADGDRASASRPPPDARGDA) are enriched in basic and acidic residues. Over residues 650–661 (ADANVNADANVD) the composition is skewed to low complexity.

This sequence belongs to the ATPase alpha/beta chains family. In terms of assembly, F-type ATPases have 2 components, CF(1) - the catalytic core - and CF(0) - the membrane proton channel. CF(1) has five subunits: alpha(3), beta(3), gamma(1), delta(1), epsilon(1). CF(0) has three main subunits: a(1), b(2) and c(9-12). The alpha and beta chains form an alternating ring which encloses part of the gamma chain. CF(1) is attached to CF(0) by a central stalk formed by the gamma and epsilon chains, while a peripheral stalk is formed by the delta and b chains.

It localises to the cell inner membrane. It carries out the reaction ATP + H2O + 4 H(+)(in) = ADP + phosphate + 5 H(+)(out). In terms of biological role, produces ATP from ADP in the presence of a proton gradient across the membrane. The alpha chain is a regulatory subunit. The chain is ATP synthase subunit alpha 2 from Burkholderia mallei (strain NCTC 10247).